An 87-amino-acid polypeptide reads, in one-letter code: MDKARKLEIIKQYGRSEGDTGSPEVQIALLTERINSLTGHLKVHKKDHHSRRGLLMMVGHRRGLLNYLADQDIERYRTIIKQLGLRR.

The protein belongs to the universal ribosomal protein uS15 family. Part of the 30S ribosomal subunit. Forms a bridge to the 50S subunit in the 70S ribosome, contacting the 23S rRNA.

Its function is as follows. One of the primary rRNA binding proteins, it binds directly to 16S rRNA where it helps nucleate assembly of the platform of the 30S subunit by binding and bridging several RNA helices of the 16S rRNA. Forms an intersubunit bridge (bridge B4) with the 23S rRNA of the 50S subunit in the ribosome. The protein is Small ribosomal subunit protein uS15 of Clostridium botulinum (strain Eklund 17B / Type B).